Here is a 131-residue protein sequence, read N- to C-terminus: uncharacterized protein (131 aa).

This is an uncharacterized protein from Staphylococcus aureus.